The chain runs to 201 residues: CASP-like protein 1F2 (201 aa).

Residues 1–29 (MITSIATTTAGAFEVKSLGFIPYPSQPKR) are Cytoplasmic-facing. Residues 30 to 50 (IFFMAQVIFRILAIAFAVASI) traverse the membrane as a helical segment. Residues 51 to 78 (SAMVTSDQNVIVFGMDTAARYSYSSAFR) are Extracellular-facing. Residues 79–99 (FLVGANAVVCGFSVLSLIFVC) traverse the membrane as a helical segment. Topologically, residues 100 to 119 (LMSRRSEAILEKNYYLFLHD) are cytoplasmic. A helical transmembrane segment spans residues 120–140 (MVMMVMMVSGCSAATAIGYVG). At 141 to 162 (RYGEKEITWTAVCDFVGKFCNQ) the chain is on the extracellular side. Residues 163–183 (ALVSIVLAYLALFCYVALTTL) form a helical membrane-spanning segment. Residues 184 to 201 (AAHKLNHSSSTAAIRQNE) are Cytoplasmic-facing.

The protein belongs to the Casparian strip membrane proteins (CASP) family. As to quaternary structure, homodimer and heterodimers.

The protein localises to the cell membrane. This Ricinus communis (Castor bean) protein is CASP-like protein 1F2.